The following is a 36-amino-acid chain: Glycine-rich protein GWK (36 aa).

Residues 1–36 form a disordered region; sequence YKRGGGGWGGGGGWKGGGGGGGGWKGGGGGGKGGGG.

Possesses antifungal activity against a number of phytopathogenic fungi, including H.sativum and F.culmorum. The polypeptide is Glycine-rich protein GWK (Cucumis melo (Muskmelon)).